The sequence spans 64 residues: UPF0434 protein Bmul_0750/BMULJ_02510 (64 aa).

The protein belongs to the UPF0434 family.

The sequence is that of UPF0434 protein Bmul_0750/BMULJ_02510 from Burkholderia multivorans (strain ATCC 17616 / 249).